A 349-amino-acid chain; its full sequence is Insulin gene enhancer protein ISL-1 (349 aa).

LIM zinc-binding domains are found at residues 17 to 70 (CVGC…CKRD) and 79 to 133 (CAKC…RADH). A DNA-binding region (homeobox) is located at residues 181 to 240 (TTRVRTVLNEKQLHTLRTCYAANPRPDALMKEQLVEMTGLSPRVIRVWFQNKRCKDKKRS). The segment at 262–291 (GTPMVAASPERHDGGLQANPVEVQSYQPPW) is LIM-binding domain (LID). The interval 312–349 (VNFSEGGPGSNSTGSEVASMSSQLPDTPNSMVASPIEA) is disordered. Polar residues predominate over residues 321–343 (SNSTGSEVASMSSQLPDTPNSMV).

As to quaternary structure, at neuronal promoters, displaces LDB1 from LHX3 LIM domain to form a ternary complex in which ISL1 contacts both LHX3 and LDB1; allosteric structural changes in the DNA binding domain of LHX3, induced by the ISL1:LHX3 interaction, may explain differences in sequence specificity of the different complexes. Interacts with LHX3. Interacts (via C-terminus) with POU4F2 (via C-terminus) isoform 1. Interacts with POU3F2. Interacts with POU4F3. Interacts (via N-terminal domain) with MLIP; the interaction represses ISL1 transactivator activity. Interacts with GCN5/KAT2A. Interactions of ISL1 with MLIP1 or KAT2A may be mutually exclusive. Ubiquitinated probably by WWP1 E3 ubiquitin ligase; ubiquitination is followed by protein degradation. In terms of processing, phosphorylated. As to expression, expressed in subsets of neurons of the adrenal medulla and dorsal root ganglion, inner nuclear and ganglion cell layers in the retina, the pineal and some regions of the brain.

The protein resides in the nucleus. Its function is as follows. DNA-binding transcriptional activator. Recognizes and binds to the consensus octamer binding site 5'-ATAATTAA-3' in promoter of target genes. Plays a fundamental role in the gene regulatory network essential for retinal ganglion cell (RGC) differentiation. Cooperates with the transcription factor POU4F2 to achieve maximal levels of expression of RGC target genes and RGC fate specification in the developing retina. Involved in the specification of motor neurons in cooperation with LHX3 and LDB1. Binds to insulin gene enhancer sequences. Essential for heart development. Marker of one progenitor cell population that give rise to the outflow tract, right ventricle, a subset of left ventricular cells, and a large number of atrial cells as well, its function is required for these progenitors to contribute to the heart. Controls the expression of FGF and BMP growth factors in this cell population and is required for proliferation and survival of cells within pharyngeal foregut endoderm and adjacent splanchnic mesoderm as well as for migration of cardiac progenitors into the heart. This chain is Insulin gene enhancer protein ISL-1 (ISL1), found in Homo sapiens (Human).